Consider the following 427-residue polypeptide: CD209 antigen (427 aa).

Residues 1–37 (MSDSKEPRLQQLGLLEEEQLRGLGFRQTRGYKSLAGC) are Cytoplasmic-facing. 3 consecutive short sequence motifs (endocytosis signal) follow at residues 14–15 (LL), 16–18 (EEE), and 31–34 (YKSL). A helical; Signal-anchor for type II membrane protein transmembrane segment spans residues 38–58 (LGHGPLVLQLLSFTLLAALLV). At 59–427 (QVSKVPSSIS…ASATPNPPPE (369 aa)) the chain is on the extracellular side. Residue N80 is glycosylated (N-linked (GlcNAc...) asparagine). 8 consecutive repeat copies span residues 96–118 (KLQEIYQELTQLKAAVGELPEKS), 119–141 (KQQEIYQELSQLKAAVGELPEKS), 142–164 (KQQEIYQELSQLKAAVGELPEKS), 165–187 (KQQEIYQELTRLKAAVGELPEKS), 188–210 (KQQEIYQELSQLKAAVGELPEKS), 211–233 (KQQEIYQELSQLKAAVGELPEKS), 234–256 (KQQEIYQELTQLKAAVGELPEKS), and 257–280 (KQQEIYQELTQLKAAVERLCRRCP). The tract at residues 96–280 (KLQEIYQELT…AVERLCRRCP (185 aa)) is 8 X approximate tandem repeats. 3 cysteine pairs are disulfide-bonded: C279/C290, C307/C400, and C379/C392. A C-type lectin domain is found at 286 to 401 (FQGNCYFMSN…CNLAKFWICK (116 aa)). Residues E370, N372, V374, E377, N388, and D389 each coordinate Ca(2+).

As to quaternary structure, homotetramer. Interacts with C1QBP; the interaction is indicative for a C1q:C1QBP:CD209 signaling complex. Interacts with ICAM2 and ICAM3 by binding to mannose-like carbohydrates. Interacts (via C-type lectin domain) with CEACAM1 (via Lewis X moieties); this interaction is regulated by the glycosylation pattern of CEACAM1 on cell types and regulates contact between dendritic cells and neutrophils.

The protein localises to the membrane. Pathogen-recognition receptor expressed on the surface of immature dendritic cells (DCs) and involved in initiation of primary immune response. Thought to mediate the endocytosis of pathogens which are subsequently degraded in lysosomal compartments. The receptor returns to the cell membrane surface and the pathogen-derived antigens are presented to resting T-cells via MHC class II proteins to initiate the adaptive immune response. Probably recognizes in a calcium-dependent manner high mannose N-linked oligosaccharides in a variety of pathogen antigens. In terms of biological role, on DCs it is a high affinity receptor for ICAM2 and ICAM3 by binding to mannose-like carbohydrates. May act as a DC rolling receptor that mediates transendothelial migration of DC presursors from blood to tissues by binding endothelial ICAM2. Seems to regulate DC-induced T-cell proliferation by binding to ICAM3 on T-cells in the immunological synapse formed between DC and T-cells. The protein is CD209 antigen (CD209) of Gorilla gorilla gorilla (Western lowland gorilla).